Here is a 393-residue protein sequence, read N- to C-terminus: NAD(P)H-quinone oxidoreductase subunit H, chloroplastic (393 aa).

This sequence belongs to the complex I 49 kDa subunit family. NDH is composed of at least 16 different subunits, 5 of which are encoded in the nucleus.

The protein localises to the plastid. It localises to the chloroplast thylakoid membrane. It carries out the reaction a plastoquinone + NADH + (n+1) H(+)(in) = a plastoquinol + NAD(+) + n H(+)(out). It catalyses the reaction a plastoquinone + NADPH + (n+1) H(+)(in) = a plastoquinol + NADP(+) + n H(+)(out). Its function is as follows. NDH shuttles electrons from NAD(P)H:plastoquinone, via FMN and iron-sulfur (Fe-S) centers, to quinones in the photosynthetic chain and possibly in a chloroplast respiratory chain. The immediate electron acceptor for the enzyme in this species is believed to be plastoquinone. Couples the redox reaction to proton translocation, and thus conserves the redox energy in a proton gradient. The protein is NAD(P)H-quinone oxidoreductase subunit H, chloroplastic of Zygnema circumcarinatum (Green alga).